The sequence spans 105 residues: Small ribosomal subunit protein uS10 (105 aa).

Belongs to the universal ribosomal protein uS10 family. Part of the 30S ribosomal subunit.

Functionally, involved in the binding of tRNA to the ribosomes. This Rickettsia rickettsii (strain Iowa) protein is Small ribosomal subunit protein uS10.